Consider the following 410-residue polypeptide: Transcription factor Dp-1 (410 aa).

Lys-3 bears the N6-acetyllysine mark. The residue at position 23 (Ser-23) is a Phosphoserine. Positions 73–100 are enriched in polar residues; the sequence is SNTLVVGSPHTPSTHFASQNQPSDSSPW. The interval 73 to 116 is disordered; it reads SNTLVVGSPHTPSTHFASQNQPSDSSPWSAGKRNRKGEKNGKGL. A compositionally biased stretch (basic residues) spans 104–116; it reads KRNRKGEKNGKGL. The tract at residues 105 to 127 is interaction with CEBPA; it reads RNRKGEKNGKGLRHFSMKVCEKV. The DNA-binding element occupies 113–195; that stretch reads GKGLRHFSMK…KKEIKWIGLP (83 aa). The DEF box signature appears at 161–195; the sequence is DQKNIRRRVYDALNVLMAMNIISKEKKEIKWIGLP. The interval 204-277 is dimerization; the sequence is NLEVERQRRL…KKTVIDCSIS (74 aa). Residues 211 to 327 are enhances binding of RB protein to E2F; sequence RRLERIKQKQ…DLKMARSLVP (117 aa). A DCB1 region spans residues 214–246; it reads ERIKQKQSQLQELILQQIAFKNLVQRNRHAEQQ. A DCB2 region spans residues 259 to 315; it reads LPFIIVNTSKKTVIDCSISNDKFEYLFNFDNTFEIHDDIEVLKRMGMACGLESGSCS. The tract at residues 370-410 is disordered; the sequence is GMLATSSNGSQYSGSRVETPVSYVGEDDEEDDDFNENDEDD. Residues 373-385 show a composition bias toward polar residues; that stretch reads ATSSNGSQYSGSR. The span at 394–410 shows a compositional bias: acidic residues; it reads GEDDEEDDDFNENDEDD.

This sequence belongs to the E2F/DP family. Component of the E2F:DP transcription factor complex. Forms heterodimers with E2F family members. The complex can interact with hypophosphorylated retinoblastoma protein RB1 and related proteins (RBL1 and RBL2) that inhibit the E2F transactivation domain. This repression involves recruitment of histone deacetylase (HDAC). During the cell cycle, from mid-to-late G1 phase, RB family members become phosphorylated, detach from the DRTF1/E2F complex to render E2F transcriptionally active. Viral oncoproteins, notably E1A, T-antigen and HPV E7, are capable of sequestering RB protein, thus releasing the active complex. Part of the E2F6.com-1 complex in G0 phase is composed of E2F6, MGA, MAX, TFDP1, CBX3, BAT8, EUHMTASE1, RING1, RNF2, MBLR, L3MBTL2 YAF2. Component of the DREAM complex (also named LINC complex) at least composed of E2F4, E2F5, LIN9, LIN37, LIN52, LIN54, MYBL1, MYBL2, RBL1, RBL2, RBBP4, TFDP1 and TFDP2. The complex exists in quiescent cells where it represses cell cycle-dependent genes. It dissociates in S phase when LIN9, LIN37, LIN52 and LIN54 form a subcomplex that binds to MYBL2. The complex TFDP1:E2F1 interacts with CEBPA; the interaction prevents CEBPA binding to target gene promoters and represses its transcriptional activity. In terms of processing, phosphorylation by E2F1-bound cyclin A-CDK2, in the S phase, inhibits E2F-mediated DNA binding and transactivation. Post-translationally, ubiquitinated by the BCR(KBTBD5) complex, leading to its subsequent degradation. In terms of tissue distribution, highest levels in muscle. Also expressed in brain, placenta, liver and kidney. Lower levels in lung and pancreas. Not detected in heart.

The protein localises to the nucleus. It localises to the cytoplasm. Its function is as follows. Can stimulate E2F-dependent transcription. Binds DNA cooperatively with E2F family members through the E2 recognition site, 5'-TTTC[CG]CGC-3', found in the promoter region of a number of genes whose products are involved in cell cycle regulation or in DNA replication. The E2F1:DP complex appears to mediate both cell proliferation and apoptosis. Blocks adipocyte differentiation by repressing CEBPA binding to its target gene promoters. This is Transcription factor Dp-1 (TFDP1) from Homo sapiens (Human).